The chain runs to 319 residues: Lipoyl synthase (319 aa).

Residues 5–31 (LDTISANPVRPRHPEKANRPDALSPPK) are disordered. [4Fe-4S] cluster is bound by residues cysteine 61, cysteine 66, cysteine 72, cysteine 87, cysteine 91, cysteine 94, and serine 300. Positions 73 to 289 (WDKKHATFMI…ETVAYTKGFL (217 aa)) constitute a Radical SAM core domain.

Belongs to the radical SAM superfamily. Lipoyl synthase family. It depends on [4Fe-4S] cluster as a cofactor.

It localises to the cytoplasm. The enzyme catalyses [[Fe-S] cluster scaffold protein carrying a second [4Fe-4S](2+) cluster] + N(6)-octanoyl-L-lysyl-[protein] + 2 oxidized [2Fe-2S]-[ferredoxin] + 2 S-adenosyl-L-methionine + 4 H(+) = [[Fe-S] cluster scaffold protein] + N(6)-[(R)-dihydrolipoyl]-L-lysyl-[protein] + 4 Fe(3+) + 2 hydrogen sulfide + 2 5'-deoxyadenosine + 2 L-methionine + 2 reduced [2Fe-2S]-[ferredoxin]. The protein operates within protein modification; protein lipoylation via endogenous pathway; protein N(6)-(lipoyl)lysine from octanoyl-[acyl-carrier-protein]: step 2/2. Catalyzes the radical-mediated insertion of two sulfur atoms into the C-6 and C-8 positions of the octanoyl moiety bound to the lipoyl domains of lipoate-dependent enzymes, thereby converting the octanoylated domains into lipoylated derivatives. The chain is Lipoyl synthase from Nitrobacter winogradskyi (strain ATCC 25391 / DSM 10237 / CIP 104748 / NCIMB 11846 / Nb-255).